Consider the following 196-residue polypeptide: Peptidyl-tRNA hydrolase (196 aa).

Residue Y17 coordinates tRNA. Residue H22 is the Proton acceptor of the active site. Residues Y69, N71, and N117 each contribute to the tRNA site.

It belongs to the PTH family. Monomer.

Its subcellular location is the cytoplasm. It carries out the reaction an N-acyl-L-alpha-aminoacyl-tRNA + H2O = an N-acyl-L-amino acid + a tRNA + H(+). Hydrolyzes ribosome-free peptidyl-tRNAs (with 1 or more amino acids incorporated), which drop off the ribosome during protein synthesis, or as a result of ribosome stalling. In terms of biological role, catalyzes the release of premature peptidyl moieties from peptidyl-tRNA molecules trapped in stalled 50S ribosomal subunits, and thus maintains levels of free tRNAs and 50S ribosomes. In Pseudarthrobacter chlorophenolicus (strain ATCC 700700 / DSM 12829 / CIP 107037 / JCM 12360 / KCTC 9906 / NCIMB 13794 / A6) (Arthrobacter chlorophenolicus), this protein is Peptidyl-tRNA hydrolase.